The primary structure comprises 249 residues: MDIVLEATSQTETQVAVQLEPLSSNVVAIVPAAGIGSRMGAGKPKQYLPLLGQSILAHTLDKLLSHPLISQVIVALHPEDADFYALPQAKHPKLKTVIGGSERANSVLAALDKAPDNSWALVHDAARPCLMASDIDKLLTSRVQFPQGAILAMPVRDTMKRANSLGEINSTVCRDNLWHALTPQLFPTSLLRLHLQGALNAGAVVTDEASAMEWAGISPGLVAGRADNIKVTHPDDLELAELFLMRAKA.

This sequence belongs to the IspD/TarI cytidylyltransferase family. IspD subfamily.

The enzyme catalyses 2-C-methyl-D-erythritol 4-phosphate + CTP + H(+) = 4-CDP-2-C-methyl-D-erythritol + diphosphate. The protein operates within isoprenoid biosynthesis; isopentenyl diphosphate biosynthesis via DXP pathway; isopentenyl diphosphate from 1-deoxy-D-xylulose 5-phosphate: step 2/6. Its function is as follows. Catalyzes the formation of 4-diphosphocytidyl-2-C-methyl-D-erythritol from CTP and 2-C-methyl-D-erythritol 4-phosphate (MEP). This Shewanella oneidensis (strain ATCC 700550 / JCM 31522 / CIP 106686 / LMG 19005 / NCIMB 14063 / MR-1) protein is 2-C-methyl-D-erythritol 4-phosphate cytidylyltransferase.